Here is a 440-residue protein sequence, read N- to C-terminus: Thymidine phosphorylase (440 aa).

This sequence belongs to the thymidine/pyrimidine-nucleoside phosphorylase family. In terms of assembly, homodimer.

It catalyses the reaction thymidine + phosphate = 2-deoxy-alpha-D-ribose 1-phosphate + thymine. It functions in the pathway pyrimidine metabolism; dTMP biosynthesis via salvage pathway; dTMP from thymine: step 1/2. In terms of biological role, the enzymes which catalyze the reversible phosphorolysis of pyrimidine nucleosides are involved in the degradation of these compounds and in their utilization as carbon and energy sources, or in the rescue of pyrimidine bases for nucleotide synthesis. The protein is Thymidine phosphorylase of Yersinia pseudotuberculosis serotype O:1b (strain IP 31758).